We begin with the raw amino-acid sequence, 216 residues long: HTH-type transcriptional regulator EthR (216 aa).

The segment covering 1–10 (MTTSAASQAS) has biased composition (polar residues). The interval 1–24 (MTTSAASQASLPRGRRTARPSGDD) is disordered. An HTH tetR-type domain is found at 23 to 83 (DDRELAILAT…TLLDRVVNQA (61 aa)). Positions 46-65 (SVDDLAKGAGISRPTFYFYF) form a DNA-binding region, H-T-H motif.

As to quaternary structure, homodimer.

Functionally, involved in the repression of the monooxygenase EthA which is responsible of the formation of the active metabolite of ethionamide (ETH). The sequence is that of HTH-type transcriptional regulator EthR (ethR) from Mycobacterium bovis (strain ATCC BAA-935 / AF2122/97).